A 204-amino-acid chain; its full sequence is Small ribosomal subunit protein uS4 (204 aa).

The disordered stretch occupies residues 25 to 45; that stretch reads AVPSRRAYPPGQHGQARKKRS. The S4 RNA-binding domain occupies 92-152; it reads MRLDNIIFRL…NKENSRRLAE (61 aa).

It belongs to the universal ribosomal protein uS4 family. In terms of assembly, part of the 30S ribosomal subunit. Contacts protein S5. The interaction surface between S4 and S5 is involved in control of translational fidelity.

Its function is as follows. One of the primary rRNA binding proteins, it binds directly to 16S rRNA where it nucleates assembly of the body of the 30S subunit. Functionally, with S5 and S12 plays an important role in translational accuracy. This is Small ribosomal subunit protein uS4 from Cyanothece sp. (strain PCC 7425 / ATCC 29141).